We begin with the raw amino-acid sequence, 42 residues long: Alpha-lactalbumin I (42 aa).

The C-type lysozyme domain occupies 1-42 (IDYRKCQASQILKEHGMDKVIPLPELVCTMFHISGLSPQAEV).

Belongs to the glycosyl hydrolase 22 family. In terms of assembly, lactose synthase (LS) is a heterodimer of a catalytic component, beta1,4-galactosyltransferase (beta4Gal-T1) and a regulatory component, alpha-lactalbumin (LA). Mammary gland specific. Secreted in milk.

It localises to the secreted. Regulatory subunit of lactose synthase, changes the substrate specificity of galactosyltransferase in the mammary gland making glucose a good acceptor substrate for this enzyme. This enables LS to synthesize lactose, the major carbohydrate component of milk. In other tissues, galactosyltransferase transfers galactose onto the N-acetylglucosamine of the oligosaccharide chains in glycoproteins. This Macropus giganteus (Eastern gray kangaroo) protein is Alpha-lactalbumin I (LALBA).